The chain runs to 300 residues: GTPase Era (300 aa).

The Era-type G domain maps to 6–173 (HSGFVAILGR…IESLVNTLPE (168 aa)). The tract at residues 14 to 21 (GRPNVGKS) is G1. 14-21 (GRPNVGKS) lines the GTP pocket. A G2 region spans residues 40 to 44 (QTTRN). A G3 region spans residues 61-64 (DTPG). GTP contacts are provided by residues 61–65 (DTPGI) and 123–126 (NKID). A G4 region spans residues 123–126 (NKID). The interval 152-154 (ISA) is G5. A KH type-2 domain is found at 204–281 (TREEVPHSVA…YLELWVKVQP (78 aa)).

It belongs to the TRAFAC class TrmE-Era-EngA-EngB-Septin-like GTPase superfamily. Era GTPase family. In terms of assembly, monomer.

The protein localises to the cytoplasm. The protein resides in the cell membrane. An essential GTPase that binds both GDP and GTP, with rapid nucleotide exchange. Plays a role in 16S rRNA processing and 30S ribosomal subunit biogenesis and possibly also in cell cycle regulation and energy metabolism. This Ligilactobacillus salivarius (strain UCC118) (Lactobacillus salivarius) protein is GTPase Era.